Reading from the N-terminus, the 106-residue chain is MFAVIETGGKQYKVKPGQRLRVESLAGEVGDKIAFDKVLLVAAGEEVSVGAPYVAGGSVQATIANHGRHKKVTIIKFRRRKHSMKRQGHRQNYTEIVIDTINGKTE.

It belongs to the bacterial ribosomal protein bL21 family. In terms of assembly, part of the 50S ribosomal subunit. Contacts protein L20.

Its function is as follows. This protein binds to 23S rRNA in the presence of protein L20. The polypeptide is Large ribosomal subunit protein bL21 (Dichelobacter nodosus (strain VCS1703A)).